The sequence spans 345 residues: tRNA pseudouridine synthase B (345 aa).

The active-site Nucleophile is D39.

The protein belongs to the pseudouridine synthase TruB family. Type 1 subfamily.

It carries out the reaction uridine(55) in tRNA = pseudouridine(55) in tRNA. Its function is as follows. Responsible for synthesis of pseudouridine from uracil-55 in the psi GC loop of transfer RNAs. The protein is tRNA pseudouridine synthase B of Rickettsia peacockii (strain Rustic).